A 117-amino-acid chain; its full sequence is uncharacterized protein (117 aa).

This is an uncharacterized protein from Escherichia coli (strain K12).